The primary structure comprises 45 residues: Photosystem II reaction center protein K (45 aa).

A propeptide spanning residues 1-8 is cleaved from the precursor; it reads MFSINFLG. Residues 17 to 37 form a helical membrane-spanning segment; it reads FDPIVDVLPIIPLLFLLLAFV.

It belongs to the PsbK family. PSII is composed of 1 copy each of membrane proteins PsbA, PsbB, PsbC, PsbD, PsbE, PsbF, PsbH, PsbI, PsbJ, PsbK, PsbL, PsbM, PsbT, PsbY, PsbZ, Psb30/Ycf12, at least 3 peripheral proteins of the oxygen-evolving complex and a large number of cofactors. It forms dimeric complexes.

It localises to the plastid. Its subcellular location is the chloroplast thylakoid membrane. In terms of biological role, one of the components of the core complex of photosystem II (PSII). PSII is a light-driven water:plastoquinone oxidoreductase that uses light energy to abstract electrons from H(2)O, generating O(2) and a proton gradient subsequently used for ATP formation. It consists of a core antenna complex that captures photons, and an electron transfer chain that converts photonic excitation into a charge separation. The polypeptide is Photosystem II reaction center protein K (Euglena viridis (Cercaria viridis)).